The sequence spans 531 residues: High affinity cysteine transporter (531 aa).

The Cytoplasmic segment spans residues 1–54; sequence MSKVDVKIGADSISSSDEILVPSRLADVTLAFMEENDAAVPEITPEQEKKLKRK. A helical membrane pass occupies residues 55–75; the sequence is LFLTIFTFVSAINLLLYMDKA. Over 76–97 the chain is Lumenal; it reads TLSYDSILGFFEDTGLTQNTYN. The helical transmembrane segment at 98 to 118 threads the bilayer; sequence TVNTLFYVGFAIGQFPGQYLA. The Cytoplasmic portion of the chain corresponds to 119-120; the sequence is QK. A helical transmembrane segment spans residues 121 to 141; it reads LPLGKFLGGLLATWTILIFLS. The Lumenal portion of the chain corresponds to 142–154; it reads CTAYNFSGVVALR. Asn-146 carries N-linked (GlcNAc...) asparagine glycosylation. The chain crosses the membrane as a helical span at residues 155 to 175; sequence FFLGLTESVVIPILITTMGMF. Over 176 to 186 the chain is Cytoplasmic; sequence FDASERAAAQP. Residues 187–207 traverse the membrane as a helical segment; sequence FFFAACMGSPIPTGFIAYGVL. At 208–218 the chain is on the lumenal side; it reads HITNPSISLWK. Residues 219–239 form a helical membrane-spanning segment; the sequence is IFTIIIGGLTFIMTVVVILWF. At 240-285 the chain is on the cytoplasmic side; sequence PNNPADVKFFSIQERVWIIRRVQASTGSSIEQKVFKKSQFREAMKD. The chain crosses the membrane as a helical span at residues 286–306; sequence YITWLFGLFFLLQQLANNLPY. Topologically, residues 307 to 324 are lumenal; sequence QQNLLFEGMGGVDALGST. A helical transmembrane segment spans residues 325–345; the sequence is LVSVAGAGFAVVCAFIATLML. Residues 346–352 are Cytoplasmic-facing; it reads AKWKNIS. A helical transmembrane segment spans residues 353–373; the sequence is ALTAIFWTLPALVGSIAAAAL. The Lumenal portion of the chain corresponds to 374 to 378; the sequence is PWDNK. Residues 379–399 form a helical membrane-spanning segment; sequence IGILANICMAGQIFGIPFIIA. At 400-413 the chain is on the cytoplasmic side; it reads LSWASSSASGYTKK. Residues 414-436 form a helical membrane-spanning segment; it reads LTRSSVSLFAMGIANIISPQIWR. The Lumenal portion of the chain corresponds to 437–447; it reads EKDSPRFLPAW. Residues 448-468 form a helical membrane-spanning segment; that stretch reads IVQIVLSFSLAPAILLLIHFI. Positions 469–498 form a coiled coil; it reads LKRRNNQRLKNYDENLQNYLDRIQLIESEN. At 469 to 531 the chain is on the cytoplasmic side; it reads LKRRNNQRLK…LENETFIYPL (63 aa). Phosphoserine occurs at positions 500 and 501.

Belongs to the major facilitator superfamily. Allantoate permease family.

It is found in the cell membrane. It localises to the endoplasmic reticulum membrane. High affinity cysteine-specific transporter. Major contributor to cysteine transport when cysteine, at low concentrations, is provided as the sole sulfur source. The protein is High affinity cysteine transporter (YCT1) of Saccharomyces cerevisiae (strain ATCC 204508 / S288c) (Baker's yeast).